A 236-amino-acid polypeptide reads, in one-letter code: 2-C-methyl-D-erythritol 4-phosphate cytidylyltransferase (236 aa).

Belongs to the IspD/TarI cytidylyltransferase family. IspD subfamily.

The catalysed reaction is 2-C-methyl-D-erythritol 4-phosphate + CTP + H(+) = 4-CDP-2-C-methyl-D-erythritol + diphosphate. Its pathway is isoprenoid biosynthesis; isopentenyl diphosphate biosynthesis via DXP pathway; isopentenyl diphosphate from 1-deoxy-D-xylulose 5-phosphate: step 2/6. Its function is as follows. Catalyzes the formation of 4-diphosphocytidyl-2-C-methyl-D-erythritol from CTP and 2-C-methyl-D-erythritol 4-phosphate (MEP). The protein is 2-C-methyl-D-erythritol 4-phosphate cytidylyltransferase of Burkholderia cenocepacia (strain ATCC BAA-245 / DSM 16553 / LMG 16656 / NCTC 13227 / J2315 / CF5610) (Burkholderia cepacia (strain J2315)).